Reading from the N-terminus, the 271-residue chain is Ribose-phosphate pyrophosphokinase 2 (271 aa).

ATP-binding positions include 34–36 (DGE) and 82–83 (RQ). Positions 115 and 150 each coordinate Mg(2+). Residue Lys-173 is part of the active site. Residues Arg-175, Asp-199, and 203–207 (STGGT) contribute to the D-ribose 5-phosphate site.

This sequence belongs to the ribose-phosphate pyrophosphokinase family. Class III (archaeal) subfamily. Mg(2+) is required as a cofactor.

The protein localises to the cytoplasm. The enzyme catalyses D-ribose 5-phosphate + ATP = 5-phospho-alpha-D-ribose 1-diphosphate + AMP + H(+). It participates in metabolic intermediate biosynthesis; 5-phospho-alpha-D-ribose 1-diphosphate biosynthesis; 5-phospho-alpha-D-ribose 1-diphosphate from D-ribose 5-phosphate (route I): step 1/1. Involved in the biosynthesis of the central metabolite phospho-alpha-D-ribosyl-1-pyrophosphate (PRPP) via the transfer of pyrophosphoryl group from ATP to 1-hydroxyl of ribose-5-phosphate (Rib-5-P). This chain is Ribose-phosphate pyrophosphokinase 2, found in Archaeoglobus fulgidus (strain ATCC 49558 / DSM 4304 / JCM 9628 / NBRC 100126 / VC-16).